Consider the following 396-residue polypeptide: MKKLLKSVLVFAALSSASSLQALPVGNPAEPSLMIDGILWEGFGGDPCDPCTTWCDAISMRMGYYGDFVFDRVLKTDVNKEFQMGAAPTTRDVAGLEKDPVVNVARPNPAYGKHMQDAEMFTNAAYMALNIWDRFDVFCTLGATTGYLKGNSASFNLVGLFGTKTQSSGFDTANIVPNTALNQAVVELYTDTTFAWSVGARAALWECGCATLGASFQYAQSKPKVEELNVLCNASEFTINKPKGYVGAEFPLDITAGTEAATGTKDASIDYHEWQASLALSYRLNMFTPYIGVKWSRVSFDADTIRIAQPKLAKPVLDTTTLNPTIAGKGTVVSSAENELADTMQIVSLQLNKMKSRKSCGIAVGTTIVDADKYAVTVETRLIDERAAHVNAQFRF.

The first 22 residues, 1–22, serve as a signal peptide directing secretion; that stretch reads MKKLLKSVLVFAALSSASSLQA.

This sequence belongs to the chlamydial porin (CP) (TC 1.B.2) family. Part of a disulfide cross-linked outer membrane complex (COMC) composed of the major outer membrane porin (MOMP), the small cysteine-rich protein (OmcA) and the large cysteine-rich periplasmic protein (OmcB).

It localises to the cell outer membrane. Functionally, in elementary bodies (EBs, the infectious stage, which is able to survive outside the host cell) provides the structural integrity of the outer envelope through disulfide cross-links with the small cysteine-rich protein and the large cysteine-rich periplasmic protein. It has been described in publications as the Sarkosyl-insoluble COMC (Chlamydia outer membrane complex), and serves as the functional equivalent of peptidoglycan. Its function is as follows. Permits diffusion of specific solutes through the outer membrane. In Chlamydia trachomatis, this protein is Major outer membrane porin, serovar A (ompA).